The sequence spans 541 residues: 3-oxoacyl-[acyl-carrier-protein] synthase II, chloroplastic (541 aa).

The transit peptide at 1–103 (MVGASSSYAS…NRNQRRLNRA (103 aa)) directs the protein to the chloroplast. The region spanning 129–539 (QRRVVVTGMG…GHNSSIIFAP (411 aa)) is the Ketosynthase family 3 (KS3) domain. Catalysis depends on for beta-ketoacyl synthase activity residues C292, H432, and H468.

This sequence belongs to the thiolase-like superfamily. Beta-ketoacyl-ACP synthases family. Homodimer. Mostly expressed in siliques, and, to a lower extent, in leaves, stems, flower buds, and flowers.

The protein resides in the plastid. Its subcellular location is the chloroplast stroma. The enzyme catalyses a fatty acyl-[ACP] + malonyl-[ACP] + H(+) = a 3-oxoacyl-[ACP] + holo-[ACP] + CO2. In terms of biological role, essential protein that catalyzes the condensation reaction of fatty acid synthesis by the addition to an acyl acceptor of two carbons from malonyl-ACP. Specific for elongation from C-16 and C-16 to unsaturated C-18 fatty acids. Confers resistance to low temperatures by maintaining chloroplast membranes integrity. Involved in the regulation of fatty acids ratios during seed metabolism. Required for embryo development, especially at the transition from the globular to the heart stage. The protein is 3-oxoacyl-[acyl-carrier-protein] synthase II, chloroplastic (KAS2) of Arabidopsis thaliana (Mouse-ear cress).